Reading from the N-terminus, the 128-residue chain is KHDC1-like protein (128 aa).

Belongs to the KHDC1 family.

The chain is KHDC1-like protein (KHDC1L) from Homo sapiens (Human).